A 435-amino-acid polypeptide reads, in one-letter code: MGQTLSEPVVDKTSSEGEDDCCIYGVSAMQGWRISMEDAHAAVLDLHAKYTSPEETSTDPAKRLAFFGVYDGHGGDKVALFAGENVHKIVAKQDSFAKGDIEQALKDGFLATDRAILEDPKYEEEVSGCTAAVSVISKHKIWVANAGDSRSVLGVKGRAKPLSFDHKPQNEGEKARISAAGGFVDFGRVNGNLALSRAIGDFEFKKSPELAPEQQIVTAYPDVTVHELSDDDEFLVIACDGIWDCQSSQAVVEFVRRGIAAKQELYRICENMMDNCLASNSETGGVGCDNMTMIIIGLLNGRTKEECGDAAEFRGPGIRNQFEENPDDYDMENDRARGFSVRSGRIILLGDGTELVPDQNDEELFDQTEEDRDLPSQVQRELPDSARNEREGTPGPQSKTDATSKSEEGSSASTSESTVTPAGSSTSGAPEKSTS.

The PPM-type phosphatase domain occupies 23 to 298; it reads IYGVSAMQGW…DNMTMIIIGL (276 aa). 4 residues coordinate Mn(2+): Asp-71, Gly-72, Asp-240, and Asp-289. A disordered region spans residues 366–435; sequence DQTEEDRDLP…TSGAPEKSTS (70 aa). Positions 381–392 are enriched in basic and acidic residues; the sequence is ELPDSARNEREG. The span at 409-418 shows a compositional bias: low complexity; the sequence is GSSASTSEST. Positions 419 to 435 are enriched in polar residues; sequence VTPAGSSTSGAPEKSTS.

It belongs to the PP2C family. Requires Mg(2+) as cofactor. The cofactor is Mn(2+).

It is found in the cytoplasm. Its subcellular location is the nucleus. It catalyses the reaction O-phospho-L-seryl-[protein] + H2O = L-seryl-[protein] + phosphate. The catalysed reaction is O-phospho-L-threonyl-[protein] + H2O = L-threonyl-[protein] + phosphate. Dephosphorylating regulator for many key proteins. Dephosphorylates phosphoglycerate kinase pgk1 at least on 'Ser-203' to negatively regulate targeting of pgk1 to the mitochondrion, thereby negatively regulating production of acetyl-CoA and consequently aflatoxin biosynthesis. The protein is Protein phosphatase 2C homolog 2 of Aspergillus flavus (strain ATCC 200026 / FGSC A1120 / IAM 13836 / NRRL 3357 / JCM 12722 / SRRC 167).